The chain runs to 259 residues: Methyltransferase afvD (259 aa).

Belongs to the class I-like SAM-binding methyltransferase superfamily.

Its pathway is secondary metabolite biosynthesis. Its function is as follows. Methyltransferase; part of the gene cluster that mediates the biosynthesis of aflavarin, a bicoumarin that exhibits anti-insectan activity against the fungivorous beetle C.hemipterus. The sequence is that of Methyltransferase afvD from Aspergillus flavus (strain ATCC 200026 / FGSC A1120 / IAM 13836 / NRRL 3357 / JCM 12722 / SRRC 167).